A 720-amino-acid polypeptide reads, in one-letter code: Dedicator of cytokinesis protein 9 (720 aa).

One can recognise a DOCKER domain in the interval 186-638 (KSYASTPELR…LSDIIVPRIC (453 aa)). The segment at 277–638 (DEEASMMEDV…LSDIIVPRIC (362 aa)) is interaction with CDC42.

Belongs to the DOCK family. In terms of assembly, homodimer. Interacts preferentially with nucleotide-depleted CDC42.

Its subcellular location is the endomembrane system. Functionally, guanine nucleotide-exchange factor (GEF) that activates CDC42 by exchanging bound GDP for free GTP. Overexpression induces filopodia formation. This Rattus norvegicus (Rat) protein is Dedicator of cytokinesis protein 9 (Dock9).